The chain runs to 80 residues: Acyl carrier protein (80 aa).

The Carrier domain maps to 2 to 77 (KNIEERIKKI…KSIDFIQNKN (76 aa)). At S37 the chain carries O-(pantetheine 4'-phosphoryl)serine.

This sequence belongs to the acyl carrier protein (ACP) family. Post-translationally, 4'-phosphopantetheine is transferred from CoA to a specific serine of apo-ACP by AcpS. This modification is essential for activity because fatty acids are bound in thioester linkage to the sulfhydryl of the prosthetic group.

The protein resides in the cytoplasm. Its pathway is lipid metabolism; fatty acid biosynthesis. Carrier of the growing fatty acid chain in fatty acid biosynthesis. The sequence is that of Acyl carrier protein from Buchnera aphidicola subsp. Acyrthosiphon pisum (strain 5A).